We begin with the raw amino-acid sequence, 576 residues long: Proline--tRNA ligase (576 aa).

The protein belongs to the class-II aminoacyl-tRNA synthetase family. ProS type 1 subfamily. As to quaternary structure, homodimer.

The protein localises to the cytoplasm. The catalysed reaction is tRNA(Pro) + L-proline + ATP = L-prolyl-tRNA(Pro) + AMP + diphosphate. In terms of biological role, catalyzes the attachment of proline to tRNA(Pro) in a two-step reaction: proline is first activated by ATP to form Pro-AMP and then transferred to the acceptor end of tRNA(Pro). As ProRS can inadvertently accommodate and process non-cognate amino acids such as alanine and cysteine, to avoid such errors it has two additional distinct editing activities against alanine. One activity is designated as 'pretransfer' editing and involves the tRNA(Pro)-independent hydrolysis of activated Ala-AMP. The other activity is designated 'posttransfer' editing and involves deacylation of mischarged Ala-tRNA(Pro). The misacylated Cys-tRNA(Pro) is not edited by ProRS. The sequence is that of Proline--tRNA ligase from Thiobacillus denitrificans (strain ATCC 25259 / T1).